The chain runs to 328 residues: N-acyl-aromatic-L-amino acid amidohydrolase (carboxylate-forming) A (328 aa).

2 residues coordinate Zn(2+): H30 and E33. Residues R74 and 81–82 (NR) contribute to the substrate site. H127 contacts Zn(2+). Positions 189 and 300 each coordinate substrate.

It belongs to the AspA/AstE family. Aspartoacylase subfamily. Homotetramer. It depends on Zn(2+) as a cofactor.

Its subcellular location is the apical cell membrane. It localises to the cytoplasm. The enzyme catalyses an N-acyl-aromatic L-alpha-amino acid + H2O = an aromatic L-alpha-amino acid + a carboxylate. The catalysed reaction is an N-acetyl-L-cysteine-S-conjugate + H2O = an S-substituted L-cysteine + acetate. Its function is as follows. Plays an important role in deacetylating mercapturic acids in kidney proximal tubules. This chain is N-acyl-aromatic-L-amino acid amidohydrolase (carboxylate-forming) A (acy3.1), found in Danio rerio (Zebrafish).